A 581-amino-acid polypeptide reads, in one-letter code: CUE domain-containing protein 3 (581 aa).

The 44-residue stretch at 271–314 folds into the CUE domain; that stretch reads INPGDVKSLIELFPQLSVEEAVEHLSASLGNIDAACESVITSSL. Residue Tyr386 is modified to Phosphotyrosine. 2 disordered regions span residues 422 to 448 and 522 to 581; these read DDTY…ASSK and GSGN…SNEK. Residues 522-542 are compositionally biased toward polar residues; sequence GSGNTNIGSLRQTKFKQSNYT. Residues 552-581 show a composition bias toward basic residues; that stretch reads QHRPSRPSKNPSLKKKKYVRTKPKKASNEK.

In terms of assembly, component of the RQT (ribosome quality control trigger) complex.

The protein localises to the cytoplasm. The protein resides in the nucleus. Its function is as follows. Involved in activation of the ribosome quality control (RQC) pathway, a pathway that degrades nascent peptide chains during problematic translation. Specifically recognizes and binds RPS20/uS10 ubiquitinated by HEL2, promoting recruitment of the RQT (ribosome quality control trigger) complex on stalled ribosomes, followed by disassembly of stalled ribosomes. In Schizosaccharomyces pombe (strain 972 / ATCC 24843) (Fission yeast), this protein is CUE domain-containing protein 3.